Reading from the N-terminus, the 186-residue chain is Testis-expressed protein 29 (186 aa).

The Extracellular portion of the chain corresponds to 1–56; it reads MKDTKEIKRSPPHLLKKFAVCDIPLYDICDYNVTRERCRSLDCCFYRGVCYEKAVP. A helical membrane pass occupies residues 57 to 77; that stretch reads IYVQVFFTLIWFVAGAFIIAV. At 78–151 the chain is on the cytoplasmic side; the sequence is IYRVIQGTKK…AGCCLWMKSK (74 aa). Disordered regions lie at residues 104–138 and 151–186; these read SPTP…KTES and KPAK…QAAP. Positions 108-133 are enriched in pro residues; the sequence is ELIPEPIPEPIPEPIPEPIREPPPPV.

The protein resides in the membrane. This Mus musculus (Mouse) protein is Testis-expressed protein 29 (Tex29).